We begin with the raw amino-acid sequence, 516 residues long: Bifunctional pantoate ligase/cytidylate kinase (516 aa).

Residues 1–279 (MVRKIFQTNA…CGSTRLIDHT (279 aa)) are pantoate--beta-alanine ligase. ATP is bound at residue 29–36 (MGGLHPGH). The active-site Proton donor is the H36. Residue Q64 participates in (R)-pantoate binding. Beta-alanine is bound at residue Q64. 153–156 (GEKD) provides a ligand contact to ATP. Q159 is a (R)-pantoate binding site. 190-193 (YSSR) contributes to the ATP binding site. Residues 280-516 (FLMHRKPIIA…PEEVWPTPNS (237 aa)) are cytidylate kinase.

This sequence in the N-terminal section; belongs to the pantothenate synthetase family. The protein in the C-terminal section; belongs to the cytidylate kinase family. Type 1 subfamily.

The protein localises to the cytoplasm. The catalysed reaction is (R)-pantoate + beta-alanine + ATP = (R)-pantothenate + AMP + diphosphate + H(+). The enzyme catalyses CMP + ATP = CDP + ADP. It carries out the reaction dCMP + ATP = dCDP + ADP. It functions in the pathway cofactor biosynthesis; (R)-pantothenate biosynthesis; (R)-pantothenate from (R)-pantoate and beta-alanine: step 1/1. Functionally, catalyzes the condensation of pantoate with beta-alanine in an ATP-dependent reaction via a pantoyl-adenylate intermediate. Its function is as follows. Catalyzes the transfer of a phosphate group from ATP to either CMP or dCMP to form CDP or dCDP and ADP, respectively. The sequence is that of Bifunctional pantoate ligase/cytidylate kinase from Prochlorococcus marinus (strain NATL2A).